We begin with the raw amino-acid sequence, 263 residues long: Bidirectional sugar transporter SWEET3 (263 aa).

At 1–7 the chain is on the extracellular side; it reads MGDKLRL. The chain crosses the membrane as a helical span at residues 8–28; it reads SIGILGNGASLLLYTAPIVTF. Residues 9–97 enclose the MtN3/slv 1 domain; that stretch reads IGILGNGASL…FIYFYYASPK (89 aa). The Cytoplasmic portion of the chain corresponds to 29 to 42; it reads SRVFKKKSTEEFSC. Residues 43–63 form a helical membrane-spanning segment; that stretch reads FPYVMTLFNCLIYTWYGLPIV. Topologically, residues 64 to 71 are extracellular; sequence SHLWENLP. The chain crosses the membrane as a helical span at residues 72 to 92; it reads LVTINGVGILLESIFIFIYFY. The Cytoplasmic segment spans residues 93–103; it reads YASPKEKIKVG. The chain crosses the membrane as a helical span at residues 104–124; the sequence is VTFVPVIVGFGLTTAISALVF. Residues 125–132 are Extracellular-facing; that stretch reads DDHRHRKS. A helical transmembrane segment spans residues 133–153; it reads FVGSVGLVASISMYGSPLVVM. One can recognise a MtN3/slv 2 domain in the interval 133-217; sequence FVGSVGLVAS…ILYFKYKNKK (85 aa). Over 154-165 the chain is Cytoplasmic; it reads KKVIETRSVEYM. A helical membrane pass occupies residues 166–186; the sequence is PFYLSFFSFLASSLWLAYGLL. Over 187–190 the chain is Extracellular; that stretch reads SHDL. A helical transmembrane segment spans residues 191-211; it reads FLASPNMVATPLGILQLILYF. The Cytoplasmic segment spans residues 212-263; it reads KYKNKKDLAPTTMVITKRNDHDDKNKATLEFVVDVDRNSDTNEKNSNNASSI.

It belongs to the SWEET sugar transporter family. In terms of assembly, forms heterooligomers with SWEET11, SWEET13 and SWEET17.

It is found in the cell membrane. Mediates both low-affinity uptake and efflux of sugar across the plasma membrane. The sequence is that of Bidirectional sugar transporter SWEET3 from Arabidopsis thaliana (Mouse-ear cress).